The primary structure comprises 200 residues: Holliday junction branch migration complex subunit RuvA (200 aa).

A domain I region spans residues 1–63 (MYAYVKGKLT…EDAQLLYGFS (63 aa)). The interval 64–142 (SEEEKDMFLS…ITEEDSDSLL (79 aa)) is domain II. Positions 143–149 (QVDATST) are flexible linker. Residues 150 to 200 (EQDQFVQEAMLALEALGYSKRELAKVEKTLNKNKYDSVDEAVKAGLQLVVS) form a domain III region.

Belongs to the RuvA family. In terms of assembly, homotetramer. Forms an RuvA(8)-RuvB(12)-Holliday junction (HJ) complex. HJ DNA is sandwiched between 2 RuvA tetramers; dsDNA enters through RuvA and exits via RuvB. An RuvB hexamer assembles on each DNA strand where it exits the tetramer. Each RuvB hexamer is contacted by two RuvA subunits (via domain III) on 2 adjacent RuvB subunits; this complex drives branch migration. In the full resolvosome a probable DNA-RuvA(4)-RuvB(12)-RuvC(2) complex forms which resolves the HJ.

The protein localises to the cytoplasm. Its function is as follows. The RuvA-RuvB-RuvC complex processes Holliday junction (HJ) DNA during genetic recombination and DNA repair, while the RuvA-RuvB complex plays an important role in the rescue of blocked DNA replication forks via replication fork reversal (RFR). RuvA specifically binds to HJ cruciform DNA, conferring on it an open structure. The RuvB hexamer acts as an ATP-dependent pump, pulling dsDNA into and through the RuvAB complex. HJ branch migration allows RuvC to scan DNA until it finds its consensus sequence, where it cleaves and resolves the cruciform DNA. In Staphylococcus aureus (strain MRSA252), this protein is Holliday junction branch migration complex subunit RuvA.